The chain runs to 423 residues: GPI mannosyltransferase 2 (423 aa).

Transmembrane regions (helical) follow at residues 7 to 27 (LTLI…ILSG), 102 to 122 (VILG…LVLY), 128 to 148 (IFNP…PTAT), 151 to 171 (APYT…LLSI), 191 to 211 (TGIF…AHIF), 228 to 248 (FLSA…TETV), 298 to 318 (LAMP…SHLV), 333 to 353 (PPPI…LLLF), and 400 to 420 (YWIG…AGHY).

This sequence belongs to the PIGV family.

The protein localises to the endoplasmic reticulum membrane. The protein operates within glycolipid biosynthesis; glycosylphosphatidylinositol-anchor biosynthesis. Mannosyltransferase involved in glycosylphosphatidylinositol-anchor biosynthesis. Transfers the second mannose to the glycosylphosphatidylinositol during GPI precursor assembly. This is GPI mannosyltransferase 2 (GPI18) from Cryptococcus neoformans var. neoformans serotype D (strain JEC21 / ATCC MYA-565) (Filobasidiella neoformans).